The sequence spans 367 residues: Glutamate 5-kinase (367 aa).

K10 is a binding site for ATP. Substrate is bound by residues D137 and N149. Residues T169 to D170 and T211 to K217 contribute to the ATP site. One can recognise a PUA domain in the interval A275–E353.

It belongs to the glutamate 5-kinase family.

Its subcellular location is the cytoplasm. The enzyme catalyses L-glutamate + ATP = L-glutamyl 5-phosphate + ADP. It participates in amino-acid biosynthesis; L-proline biosynthesis; L-glutamate 5-semialdehyde from L-glutamate: step 1/2. Functionally, catalyzes the transfer of a phosphate group to glutamate to form L-glutamate 5-phosphate. In Yersinia pestis bv. Antiqua (strain Antiqua), this protein is Glutamate 5-kinase.